A 607-amino-acid polypeptide reads, in one-letter code: Elongation factor 4 (607 aa).

In terms of domain architecture, tr-type G spans 11–193; sequence EKIRNFSIIA…QIVEKVPAPT (183 aa). GTP is bound by residues 23-28 and 140-143; these read DHGKST and NKID.

This sequence belongs to the TRAFAC class translation factor GTPase superfamily. Classic translation factor GTPase family. LepA subfamily.

It localises to the cell membrane. It catalyses the reaction GTP + H2O = GDP + phosphate + H(+). Required for accurate and efficient protein synthesis under certain stress conditions. May act as a fidelity factor of the translation reaction, by catalyzing a one-codon backward translocation of tRNAs on improperly translocated ribosomes. Back-translocation proceeds from a post-translocation (POST) complex to a pre-translocation (PRE) complex, thus giving elongation factor G a second chance to translocate the tRNAs correctly. Binds to ribosomes in a GTP-dependent manner. This is Elongation factor 4 from Streptococcus pneumoniae (strain Hungary19A-6).